The following is a 263-amino-acid chain: Tryptophan synthase alpha chain (263 aa).

Residues Glu-51 and Asp-62 each act as proton acceptor in the active site.

The protein belongs to the TrpA family. As to quaternary structure, tetramer of two alpha and two beta chains.

The enzyme catalyses (1S,2R)-1-C-(indol-3-yl)glycerol 3-phosphate + L-serine = D-glyceraldehyde 3-phosphate + L-tryptophan + H2O. It functions in the pathway amino-acid biosynthesis; L-tryptophan biosynthesis; L-tryptophan from chorismate: step 5/5. In terms of biological role, the alpha subunit is responsible for the aldol cleavage of indoleglycerol phosphate to indole and glyceraldehyde 3-phosphate. The sequence is that of Tryptophan synthase alpha chain from Methanosarcina barkeri (strain Fusaro / DSM 804).